The following is a 518-amino-acid chain: 3-phosphoshikimate 1-carboxyvinyltransferase 1, chloroplastic (518 aa).

Residues 1 to 74 constitute a chloroplast transit peptide; it reads MAQISSMGQG…RISASVVTAQ (74 aa). Positions 97, 98, and 102 each coordinate 3-phosphoshikimate. Lysine 97 contributes to the phosphoenolpyruvate binding site. 2 residues coordinate phosphoenolpyruvate: glycine 175 and arginine 205. Residues serine 252, serine 253, glutamine 254, serine 280, aspartate 405, and lysine 432 each coordinate 3-phosphoshikimate. Residue glutamine 254 participates in phosphoenolpyruvate binding. Catalysis depends on aspartate 405, which acts as the Proton acceptor. Phosphoenolpyruvate is bound by residues arginine 436, arginine 478, and lysine 503.

Belongs to the EPSP synthase family.

It localises to the plastid. Its subcellular location is the chloroplast. The catalysed reaction is 3-phosphoshikimate + phosphoenolpyruvate = 5-O-(1-carboxyvinyl)-3-phosphoshikimate + phosphate. It functions in the pathway metabolic intermediate biosynthesis; chorismate biosynthesis; chorismate from D-erythrose 4-phosphate and phosphoenolpyruvate: step 6/7. Catalyzes the transfer of the enolpyruvyl moiety of phosphoenolpyruvate (PEP) to the 5-hydroxyl of shikimate-3-phosphate (S3P) to produce enolpyruvyl shikimate-3-phosphate and inorganic phosphate. In Nicotiana tabacum (Common tobacco), this protein is 3-phosphoshikimate 1-carboxyvinyltransferase 1, chloroplastic (EPSPS-1).